The sequence spans 185 residues: Dirigent protein 12 (185 aa).

The signal sequence occupies residues 1 to 25 (MTNQIYKQVFSFFLSVLLLQSSTVS). An intrachain disulfide couples C37 to C184. N-linked (GlcNAc...) asparagine glycans are attached at residues N56 and N120.

The protein belongs to the plant dirigent protein family. In terms of assembly, homodimer. In terms of tissue distribution, seed coat specific expression.

Its subcellular location is the secreted. It is found in the extracellular space. It localises to the apoplast. Dirigent proteins impart stereoselectivity on the phenoxy radical-coupling reaction, yielding optically active lignans from two molecules of coniferyl alcohol in the biosynthesis of lignans, flavonolignans, and alkaloids and thus plays a central role in plant secondary metabolism. Required for seed accumulation of neolignans. The sequence is that of Dirigent protein 12 (DIR12) from Arabidopsis thaliana (Mouse-ear cress).